We begin with the raw amino-acid sequence, 234 residues long: Toxic shock syndrome toxin-1 (234 aa).

The first 40 residues, 1-40 (MNKKLLMNFFIVSPLLLATTATDFTPVPLSSNQIIKTAKA), serve as a signal peptide directing secretion.

It belongs to the staphylococcal/streptococcal toxin family.

Its subcellular location is the secreted. Its function is as follows. Responsible for the symptoms of toxic shock syndrome. This is Toxic shock syndrome toxin-1 (tst) from Staphylococcus aureus.